Here is a 274-residue protein sequence, read N- to C-terminus: MRKVLVFLKNSKKAFETFKRVERVLKDLNLSYKKFINRKELFKVLKPKDYELFLVIGGDGTFLSAARIASRFGVPLVGVNEGRFGFLTEIKKEEIKKVLPLVLEGRAKLQERLMIDVYLRSRNRLRYLGNYLNDAVISKSSIARIIRTKVFINGEEVLEVFGDGVILSTPTGSTAYALSAGGPIVYPESQNLLFVPICPHTLSNRPLVLPSKFEVKFKVVSENMEAFLTLDGQEGFHLKKGDEVIVKRSRYVCRMYSHPRKSFFGILKEKLRWG.

The active-site Proton acceptor is the Asp-59. NAD(+)-binding positions include 59–60, 133–134, Arg-144, Asp-163, 174–179, and Gln-233; these read DG, ND, and TAYALS.

It belongs to the NAD kinase family. A divalent metal cation serves as cofactor.

It localises to the cytoplasm. The catalysed reaction is NAD(+) + ATP = ADP + NADP(+) + H(+). In terms of biological role, involved in the regulation of the intracellular balance of NAD and NADP, and is a key enzyme in the biosynthesis of NADP. Catalyzes specifically the phosphorylation on 2'-hydroxyl of the adenosine moiety of NAD to yield NADP. This chain is NAD kinase, found in Aquifex aeolicus (strain VF5).